Consider the following 218-residue polypeptide: Peptide methionine sulfoxide reductase MsrA (218 aa).

C57 is a catalytic residue.

It belongs to the MsrA Met sulfoxide reductase family.

The enzyme catalyses L-methionyl-[protein] + [thioredoxin]-disulfide + H2O = L-methionyl-(S)-S-oxide-[protein] + [thioredoxin]-dithiol. It carries out the reaction [thioredoxin]-disulfide + L-methionine + H2O = L-methionine (S)-S-oxide + [thioredoxin]-dithiol. Functionally, has an important function as a repair enzyme for proteins that have been inactivated by oxidation. Catalyzes the reversible oxidation-reduction of methionine sulfoxide in proteins to methionine. The sequence is that of Peptide methionine sulfoxide reductase MsrA from Brucella suis biovar 1 (strain 1330).